An 822-amino-acid polypeptide reads, in one-letter code: ATP-dependent zinc metalloprotease FTSH 8, mitochondrial (822 aa).

Low complexity predominate over residues 1–25 (MSLASLARALSRRSAPSSSRARQGF). Disordered regions lie at residues 1–50 (MSLA…LHGG), 103–131 (NYYP…STDD), and 202–221 (SSPQ…TTND). The transit peptide at 1–93 (MSLASLARAL…LANPQFRRLF (93 aa)) directs the protein to the mitochondrion. Basic and acidic residues predominate over residues 108–127 (GKKEAPKGDGSNKSDSKQDS). ATP is bound at residue 375 to 382 (GPPGTGKT). His-600 serves as a coordination point for Zn(2+). Glu-601 is an active-site residue. The Zn(2+) site is built by His-604 and Asp-676. The interval 781-822 (PTNYDLFKQGFQDEEDSKNQEAAKTPQPDDDGTPSLGEVVPT) is disordered.

It in the N-terminal section; belongs to the AAA ATPase family. In the C-terminal section; belongs to the peptidase M41 family. Requires Zn(2+) as cofactor.

The protein localises to the mitochondrion. Functionally, probable ATP-dependent zinc metallopeptidase. The protein is ATP-dependent zinc metalloprotease FTSH 8, mitochondrial (FTSH8) of Oryza sativa subsp. japonica (Rice).